Here is a 1839-residue protein sequence, read N- to C-terminus: Mannuronan C5-epimerase AlgE3 (1839 aa).

PbH1 repeat units lie at residues 133 to 155 (DRDVTLERVEIREMSGYGFDPHE), 157 to 179 (TINLTIRDSVAHDNGLDGFVADY), 180 to 202 (QVGGVFENNVSYNNDRHGFNIVT), 204 to 226 (TNDFVLSNNVAYGNGGAGLVVQR), 257 to 279 (THDVTLQNAEIYGNGLYGVRVYG), 280 to 302 (AQDVQLLDNQIHDNSQNGAYAEV), 320 to 342 (TTGTWLEGNVISGSANSTFGIQE), and 347 to 369 (TDYSSLYANTIDGVQNGTVRLYG). Positions 372 to 386 (STVSEQPSSGQQATL) are enriched in polar residues. A disordered region spans residues 372–392 (STVSEQPSSGQQATLEGTAGN). Hemolysin-type calcium-binding repeat units follow at residues 387–399 (EGTAGNDVLSGTG), 406–422 (GLAGNDRLDGGAGDDTL), 424–440 (GGAGRDTLTGGAGADTF), 538–550 (TGTEGNDNLSGTD), 557–573 (GYGGNDTLNGGAGNDIL), 574–591 (VGGAGRDTLTGGAGADVF), 695–709 (EGTDGNDSLQGTGAD), 714–730 (GLGGRDSLNGGAGDDVL), and 732–748 (GGAERDTLTGGTGADTF). 8 PbH1 repeats span residues 975–997 (DRNVTLERVEIREMSGYGFDPHE), 999–1021 (TINLTIRDSVAHDNGLDGFVADY), 1022–1044 (LVDSVFENNVAYNNDRHGFNVVT), 1046–1068 (TYDFTLSNNVAYGNGGAGLVIQR), 1099–1121 (TNNITLQNAEIYGNGYSGVRLYG), 1122–1143 (TEDVQILNNQIHDNAQNVAYAE), 1161–1183 (TTGTWIEGNVISGSANSTYGIEE), and 1188–1210 (TDYSSLYANTIDGVQTGAVRLNG). Residues 1215–1236 (VSDQPGTGQQATLEGTTGNDTL) show a composition bias toward polar residues. Residues 1215–1238 (VSDQPGTGQQATLEGTTGNDTLGG) are disordered. 10 Hemolysin-type calcium-binding repeats span residues 1229 to 1243 (GTTGNDTLGGSDAHE), 1247 to 1263 (GLDGDDRLDGGAGNDIL), 1265 to 1281 (GGVGRDTLTGGAGADTF), 1398 to 1414 (GHAGNDTLDGAGGDDIL), 1415 to 1432 (VGGAGSDSLTGGAGADVF), 1536 to 1552 (EGTAGNDSLQGTAADEV), 1554 to 1571 (HGGSGRDTLAGGAGADVF), 1670 to 1681 (GGDGNDTLSGGS), 1688 to 1704 (GGAGNDSLSGGAGNDIL), and 1706 to 1722 (GGAGRDTLSGGSGSDIF).

This sequence belongs to the D-mannuronate C5-epimerase family. Requires Ca(2+) as cofactor.

Its subcellular location is the secreted. The catalysed reaction is [(1-&gt;4)-beta-D-mannuronosyl](n) = [alginate](n). The protein operates within glycan biosynthesis; alginate biosynthesis. With respect to regulation, inhibited by zinc. Its function is as follows. Converts beta-D-mannuronic acid (M) to alpha-L-guluronic acid (G), producing a polymer with gel-forming capacity, required for the formation of the cyst coat. In Azotobacter vinelandii, this protein is Mannuronan C5-epimerase AlgE3.